A 330-amino-acid chain; its full sequence is Aspartate--ammonia ligase (330 aa).

Belongs to the class-II aminoacyl-tRNA synthetase family. AsnA subfamily.

The protein resides in the cytoplasm. It carries out the reaction L-aspartate + NH4(+) + ATP = L-asparagine + AMP + diphosphate + H(+). It participates in amino-acid biosynthesis; L-asparagine biosynthesis; L-asparagine from L-aspartate (ammonia route): step 1/1. This Salmonella newport (strain SL254) protein is Aspartate--ammonia ligase.